The chain runs to 110 residues: Putative membrane protein insertion efficiency factor (110 aa).

The protein belongs to the UPF0161 family.

It is found in the cell inner membrane. Its function is as follows. Could be involved in insertion of integral membrane proteins into the membrane. This chain is Putative membrane protein insertion efficiency factor, found in Aliarcobacter butzleri (strain RM4018) (Arcobacter butzleri).